A 130-amino-acid polypeptide reads, in one-letter code: Histone H2A type 2 (130 aa).

Residues 1 to 22 are disordered; it reads MSGRGKQGGKTRAKSKTRSSRA. Ser2 is subject to N-acetylserine. Phosphoserine is present on Ser2. At Lys6 the chain carries N6-(2-hydroxyisobutyryl)lysine. Position 6 is an N6-acetyllysine (Lys6). Over residues 7-19 the composition is skewed to basic residues; sequence QGGKTRAKSKTRS. At Lys10 the chain carries N6-(2-hydroxyisobutyryl)lysine; alternate. Lys10 is subject to N6-lactoyllysine; alternate. Lys10 carries the N6-succinyllysine modification. Residues Lys14 and Lys16 each participate in a glycyl lysine isopeptide (Lys-Gly) (interchain with G-Cter in ubiquitin) cross-link. Lys37 is subject to N6-(2-hydroxyisobutyryl)lysine; alternate. At Lys76 the chain carries N6-(2-hydroxyisobutyryl)lysine. Lys96 bears the N6-(2-hydroxyisobutyryl)lysine; alternate mark. Residue Lys96 is modified to N6-succinyllysine. Position 96 is an N6-glutaryllysine; alternate (Lys96). The residue at position 105 (Gln105) is an N5-methylglutamine. N6-(2-hydroxyisobutyryl)lysine; alternate is present on Lys119. Lys119 carries the N6-glutaryllysine; alternate modification. Lys120 participates in a covalent cross-link: Glycyl lysine isopeptide (Lys-Gly) (interchain with G-Cter in ubiquitin).

Belongs to the histone H2A family. In terms of assembly, the nucleosome is a histone octamer containing two molecules each of H2A, H2B, H3 and H4 assembled in one H3-H4 heterotetramer and two H2A-H2B heterodimers. The octamer wraps approximately 147 bp of DNA. Post-translationally, monoubiquitination of Lys-120 (H2AK119Ub) gives a specific tag for epigenetic transcriptional repression. Following DNA double-strand breaks (DSBs), it is ubiquitinated through 'Lys-63' linkage of ubiquitin moieties, leading to the recruitment of repair proteins to sites of DNA damage. H2AK119Ub and ionizing radiation-induced 'Lys-63'-linked ubiquitination are distinct events. Phosphorylation on Ser-2 is enhanced during mitosis. Phosphorylation on Ser-2 directly represses transcription. In terms of processing, glutamine methylation at Gln-105 (H2AQ104me) by FBL is specifically dedicated to polymerase I. It is present at 35S ribosomal DNA locus and impairs binding of the FACT complex.

The protein resides in the nucleus. It is found in the chromosome. Functionally, core component of nucleosome. Nucleosomes wrap and compact DNA into chromatin, limiting DNA accessibility to the cellular machineries which require DNA as a template. Histones thereby play a central role in transcription regulation, DNA repair, DNA replication and chromosomal stability. DNA accessibility is regulated via a complex set of post-translational modifications of histones, also called histone code, and nucleosome remodeling. This Xenopus laevis (African clawed frog) protein is Histone H2A type 2.